We begin with the raw amino-acid sequence, 444 residues long: NAD(+)--protein-arginine ADP-ribosyltransferase Tre1 (444 aa).

Residues 72-140 (PRHVTGVLAD…NDLLACSAEI (69 aa)) form a PAAR domain region. Residues 266-444 (MTLAEAVGQE…TTHLLYREIP (179 aa)) form the TR mART core domain. The tract at residues 274–444 (QEQAKVWTQT…TTHLLYREIP (171 aa)) is ART domain. Catalysis depends on residues Arg356, Ser381, and Glu415.

Belongs to the Arg-specific ADP-ribosyltransferase family. As to quaternary structure, forms a stable complex with cognate immunity protein Tri1-Sp.

It is found in the secreted. The protein resides in the host cytoplasm. The catalysed reaction is L-arginyl-[protein] + NAD(+) = N(omega)-(ADP-D-ribosyl)-L-arginyl-[protein] + nicotinamide + H(+). Its function is as follows. Toxic component of a contact-dependent interbacterial competition system (also called effector-immunity systems). Acts by ADP-ribosylating a number of target proteins in target cells; E.coli target proteins include FtsZ, EFTu, RNase E, Fis, RL9, SucB, and LolD. FtsZ is thought to be the physiologically relevant target as it is ADP-ribosylated on a critical residue. ADP-ribosylation of FtsZ prevents formation of the FtsZ mid-cell ring and inhibits cell division. Overexpression of the whole Tre1 protein or the ART domain in E.coli is toxic; cells elongate dramatically and some undergo lysis. Toxic activity is neutralized by coexpression of the cognate immunity protein Tri1-Sp; Tri1-Sp neutralizes this protein both by binding to and occluding the active site (via Tri1's N-terminal extension) and by hydrolysis of the ADP-ribosyl moiety from the target protein. Tre1 can also be neutralized by non-cognate immunity protein Tri1-Pp from P.putida strain GB-1, with which it does not form a stable complex; DraG of R.palustris does not neutralize the toxic effects of this protein. In interbacterial competition studies Tri1 from P.putida strain B6-2 also neutralizes this protein. This Serratia proteamaculans (strain 568) protein is NAD(+)--protein-arginine ADP-ribosyltransferase Tre1.